A 329-amino-acid chain; its full sequence is MALGPGCRAVRGCRPVLKRAFSLHKAHSVKDMESILQLVRSVVPALTTKKHKGQDGRIGVVGGCREYTGAPYFAAISALKVGADLSHVFCTQEAAPVIKAYSPELIVHPVLDSPEAVRDVEQWLPRLHALVVGPGLGRDDALLENVKGILEASKARGIPVVIDADGLWLIAQQPALIQGYRKAVLTPNHVEFGRLSEAVLGVPLDGGDRHGAVLRLSQALGNVTVVQKGEQDVISDGEQVLECSQEGSGRRCGGQGDLLSGSLGVLAHWALRAGPQKTGGPSPLLVAAFGACALTRQCSQQAFQKYGRATTTSDMVAEVGPAFRRLFEA.

The transit peptide at 1–28 (MALGPGCRAVRGCRPVLKRAFSLHKAHS) directs the protein to the mitochondrion. The region spanning 35–326 (ILQLVRSVVP…AEVGPAFRRL (292 aa)) is the YjeF C-terminal domain. At K49 the chain carries N6-acetyllysine. At Y67 the chain carries Phosphotyrosine. (6S)-NADPHX contacts are provided by residues G135 and 188–194 (NHVEFGR). ATP contacts are provided by residues 228–232 (KGEQD) and 247–256 (GSGRRCGGQG). Position 257 (D257) interacts with (6S)-NADPHX.

It belongs to the NnrD/CARKD family. Mg(2+) serves as cofactor.

The protein localises to the mitochondrion. It catalyses the reaction (6S)-NADHX + ATP = ADP + phosphate + NADH + H(+). It carries out the reaction (6S)-NADPHX + ATP = ADP + phosphate + NADPH + H(+). Functionally, catalyzes the dehydration of the S-form of NAD(P)HX at the expense of ATP, which is converted to ADP. Together with NAD(P)HX epimerase, which catalyzes the epimerization of the S- and R-forms, the enzyme allows the repair of both epimers of NAD(P)HX, a damaged form of NAD(P)H that is a result of enzymatic or heat-dependent hydration. The sequence is that of ATP-dependent (S)-NAD(P)H-hydrate dehydratase from Bos taurus (Bovine).